The sequence spans 192 residues: UPF0312 protein PputGB1_5030 (192 aa).

The first 23 residues, 1–23 (MLKKTFAALALGTALLSAGQAMA), serve as a signal peptide directing secretion.

Belongs to the UPF0312 family. Type 1 subfamily.

The protein resides in the periplasm. The sequence is that of UPF0312 protein PputGB1_5030 from Pseudomonas putida (strain GB-1).